The sequence spans 249 residues: tRNA (guanine-N(7)-)-methyltransferase (249 aa).

Positions 1–24 are disordered; sequence MHSIPADTGHTPSRAPAGNGSPPA. S-adenosyl-L-methionine-binding residues include Glu-81, Glu-106, Asp-133, and Asp-156. Asp-156 is a catalytic residue. Residue Lys-160 participates in substrate binding. Residues 162-167 are interaction with RNA; it reads RHNKRR. Substrate is bound by residues Asp-192 and 227–230; that span reads TKFE.

Belongs to the class I-like SAM-binding methyltransferase superfamily. TrmB family.

The catalysed reaction is guanosine(46) in tRNA + S-adenosyl-L-methionine = N(7)-methylguanosine(46) in tRNA + S-adenosyl-L-homocysteine. Its pathway is tRNA modification; N(7)-methylguanine-tRNA biosynthesis. Functionally, catalyzes the formation of N(7)-methylguanine at position 46 (m7G46) in tRNA. The sequence is that of tRNA (guanine-N(7)-)-methyltransferase from Paracidovorax citrulli (strain AAC00-1) (Acidovorax citrulli).